The following is a 205-amino-acid chain: Protein N-terminal glutamine amidohydrolase (205 aa).

Residues Cys-20, His-74, and Asp-90 contribute to the active site.

Belongs to the NTAQ1 family. In terms of assembly, monomer.

The catalysed reaction is N-terminal L-glutaminyl-[protein] + H2O = N-terminal L-glutamyl-[protein] + NH4(+). Functionally, mediates the side-chain deamidation of N-terminal glutamine residues to glutamate, an important step in N-end rule pathway of protein degradation. Conversion of the resulting N-terminal glutamine to glutamate renders the protein susceptible to arginylation, polyubiquitination and degradation as specified by the N-end rule. Does not act on substrates with internal or C-terminal glutamine and does not act on non-glutamine residues in any position. The protein is Protein N-terminal glutamine amidohydrolase (tun) of Drosophila grimshawi (Hawaiian fruit fly).